Consider the following 469-residue polypeptide: Glutamate--tRNA ligase (469 aa).

A 'HIGH' region motif is present at residues 9-19 (PSPTGFLHVGG). Zn(2+) is bound by residues Cys98, Cys100, Cys125, and Asp127. The short motif at 236 to 240 (KLSKR) is the 'KMSKS' region element. Lys239 is an ATP binding site.

Belongs to the class-I aminoacyl-tRNA synthetase family. Glutamate--tRNA ligase type 1 subfamily. As to quaternary structure, monomer. Zn(2+) is required as a cofactor.

The protein resides in the cytoplasm. The catalysed reaction is tRNA(Glu) + L-glutamate + ATP = L-glutamyl-tRNA(Glu) + AMP + diphosphate. Its function is as follows. Catalyzes the attachment of glutamate to tRNA(Glu) in a two-step reaction: glutamate is first activated by ATP to form Glu-AMP and then transferred to the acceptor end of tRNA(Glu). This is Glutamate--tRNA ligase from Shewanella halifaxensis (strain HAW-EB4).